We begin with the raw amino-acid sequence, 481 residues long: UDP-glycosyltransferase 72E2 (481 aa).

The active-site Proton acceptor is H18. H18 contributes to the an anthocyanidin binding site. D111 (charge relay) is an active-site residue. UDP-alpha-D-glucose-binding residues include A346, Q348, H363, W366, S368, and E371. A386 provides a ligand contact to an anthocyanidin. E387 and Q388 together coordinate UDP-alpha-D-glucose.

This sequence belongs to the UDP-glycosyltransferase family. In terms of tissue distribution, expressed in seedlings and roots.

The catalysed reaction is (E)-4-coumarate + UDP-alpha-D-glucose = 4-O-(beta-D-glucosyl)-trans-4-coumarate + UDP + H(+). It carries out the reaction (E)-coniferol + UDP-alpha-D-glucose = 4-O-(beta-D-glucosyl)-(E)-coniferol + UDP + H(+). It catalyses the reaction (E)-sinapyl alcohol + UDP-alpha-D-glucose = 4-O-(beta-D-glucosyl)-trans-4-sinapoyl alcohol + UDP + H(+). The enzyme catalyses (E)-sinapate + UDP-alpha-D-glucose = 4-O-(beta-D-glucosyl)-trans-sinapate + UDP + H(+). The catalysed reaction is (E)-coniferaldehyde + UDP-alpha-D-glucose = 4-O-(beta-D-glucosyl)-4-(E)-coniferyl aldehyde + UDP + H(+). It carries out the reaction (E)-sinapaldehyde + UDP-alpha-D-glucose = 4-O-(beta-D-glucosyl)-4-trans-sinapoyl aldehyde + UDP + H(+). Its function is as follows. Involved in the O-glucosylation of monolignols (alcohol monomers of lignin). Glucosylates coniferyl alcohol to form coniferyl alcohol 4-O-glucoside. Glucosylates sinapyl alcohol to form sinapyl alcohol 4-O-glucoside. Glucosylates coniferyl aldehyde to form coniferyl aldehyde 4-O-glucoside. Glucosylates sinapyl aldehyde to form sinapyl aldehyde 4-O-glucoside. Possesses low activity with sinapate and ferulate as substrates. This Arabidopsis thaliana (Mouse-ear cress) protein is UDP-glycosyltransferase 72E2.